Reading from the N-terminus, the 553-residue chain is Glutamate--tRNA ligase (553 aa).

The 'HIGH' region motif lies at 41–51; it reads PSPTGFQHIGG. The 'KMSKS' region signature appears at 293–297; the sequence is KLSKR. Lys296 contributes to the ATP binding site.

Belongs to the class-I aminoacyl-tRNA synthetase family. Glutamate--tRNA ligase type 1 subfamily. In terms of assembly, monomer.

It is found in the cytoplasm. It catalyses the reaction tRNA(Glu) + L-glutamate + ATP = L-glutamyl-tRNA(Glu) + AMP + diphosphate. Functionally, catalyzes the attachment of glutamate to tRNA(Glu) in a two-step reaction: glutamate is first activated by ATP to form Glu-AMP and then transferred to the acceptor end of tRNA(Glu). In Clostridium beijerinckii (strain ATCC 51743 / NCIMB 8052) (Clostridium acetobutylicum), this protein is Glutamate--tRNA ligase.